The sequence spans 425 residues: Enolase (425 aa).

Residue Gln-163 coordinates (2R)-2-phosphoglycerate. The active-site Proton donor is the Glu-205. The Mg(2+) site is built by Asp-242, Glu-285, and Asp-312. The (2R)-2-phosphoglycerate site is built by Lys-337, Arg-366, Ser-367, and Lys-388. The Proton acceptor role is filled by Lys-337.

Belongs to the enolase family. It depends on Mg(2+) as a cofactor.

The protein resides in the cytoplasm. The protein localises to the secreted. It localises to the cell surface. The catalysed reaction is (2R)-2-phosphoglycerate = phosphoenolpyruvate + H2O. Its pathway is carbohydrate degradation; glycolysis; pyruvate from D-glyceraldehyde 3-phosphate: step 4/5. Functionally, catalyzes the reversible conversion of 2-phosphoglycerate (2-PG) into phosphoenolpyruvate (PEP). It is essential for the degradation of carbohydrates via glycolysis. The polypeptide is Enolase (Ruegeria sp. (strain TM1040) (Silicibacter sp.)).